The chain runs to 383 residues: Probable arabinan endo-1,5-alpha-L-arabinosidase D (383 aa).

Residues 1–22 form the signal peptide; it reads MVHITLPGLLLCLCLYLSVAPA. D49 (proton acceptor) is an active-site residue. N-linked (GlcNAc...) asparagine glycosylation is found at N75, N163, and N206. E227 acts as the Proton donor in catalysis. Residue N325 is glycosylated (N-linked (GlcNAc...) asparagine). A lipid anchor (GPI-anchor amidated asparagine) is attached at N356. The propeptide at 357 to 383 is removed in mature form; it reads PGNSLQPPSSVSLQIVAFLCLVILFTL.

This sequence belongs to the glycosyl hydrolase 43 family.

It localises to the cell membrane. It carries out the reaction Endohydrolysis of (1-&gt;5)-alpha-arabinofuranosidic linkages in (1-&gt;5)-arabinans.. It participates in glycan metabolism; L-arabinan degradation. In terms of biological role, endo-1,5-alpha-L-arabinanase involved in degradation of pectin. Its preferred substrate is linear 1,5-alpha-L-arabinan. The protein is Probable arabinan endo-1,5-alpha-L-arabinosidase D (abnD) of Emericella nidulans (strain FGSC A4 / ATCC 38163 / CBS 112.46 / NRRL 194 / M139) (Aspergillus nidulans).